A 154-amino-acid chain; its full sequence is 6,7-dimethyl-8-ribityllumazine synthase (154 aa).

5-amino-6-(D-ribitylamino)uracil-binding positions include Phe22, 56-58 (AFE), and 81-83 (VLI). 86 to 87 (ET) is a (2S)-2-hydroxy-3-oxobutyl phosphate binding site. His89 serves as the catalytic Proton donor. Residue Phe114 coordinates 5-amino-6-(D-ribitylamino)uracil. Position 128 (Arg128) interacts with (2S)-2-hydroxy-3-oxobutyl phosphate.

Belongs to the DMRL synthase family.

The catalysed reaction is (2S)-2-hydroxy-3-oxobutyl phosphate + 5-amino-6-(D-ribitylamino)uracil = 6,7-dimethyl-8-(1-D-ribityl)lumazine + phosphate + 2 H2O + H(+). It functions in the pathway cofactor biosynthesis; riboflavin biosynthesis; riboflavin from 2-hydroxy-3-oxobutyl phosphate and 5-amino-6-(D-ribitylamino)uracil: step 1/2. Its function is as follows. Catalyzes the formation of 6,7-dimethyl-8-ribityllumazine by condensation of 5-amino-6-(D-ribitylamino)uracil with 3,4-dihydroxy-2-butanone 4-phosphate. This is the penultimate step in the biosynthesis of riboflavin. The polypeptide is 6,7-dimethyl-8-ribityllumazine synthase (Chlamydia abortus (strain DSM 27085 / S26/3) (Chlamydophila abortus)).